Reading from the N-terminus, the 218-residue chain is Elongation factor Ts (218 aa).

The segment at 82–85 (TDFV) is involved in Mg(2+) ion dislocation from EF-Tu.

This sequence belongs to the EF-Ts family.

The protein localises to the cytoplasm. Functionally, associates with the EF-Tu.GDP complex and induces the exchange of GDP to GTP. It remains bound to the aminoacyl-tRNA.EF-Tu.GTP complex up to the GTP hydrolysis stage on the ribosome. In Prochlorococcus marinus (strain MIT 9303), this protein is Elongation factor Ts.